The chain runs to 632 residues: X-ray repair cross-complementing protein 5 (632 aa).

Catalysis depends on Arg-52, which acts as the Schiff-base intermediate with DNA; for 5'-deoxyribose-5-phosphate lyase activity. Residues 283-490 (LYLNKDLSFS…VDKMKGIIQK (208 aa)) enclose the Ku domain. The disordered stretch occupies residues 555–578 (DYSPEGKAAKRKQAGDAQAEKRPK). Positions 595-629 (LGKLTVSALKDTCRHYGLRSGGKKQELIDALTEYF) constitute an SAP domain.

The protein belongs to the ku70 family. Heterodimer composed of XRCC5/Ku80 and XRCC6/Ku70. Component of the core long-range non-homologous end joining (NHEJ) complex (also named DNA-PK complex) composed of PRKDC, LIG4, XRCC4, XRCC6/Ku70, XRCC5/Ku86 and NHEJ1/XLF. Additional component of the NHEJ complex includes PAXX. Following autophosphorylation, PRKDC dissociates from DNA, leading to formation of the short-range NHEJ complex, composed of LIG4, XRCC4, XRCC6/Ku70, XRCC5/Ku86 and NHEJ1/XLF. Post-translationally, phosphorylated on serine residues.

The protein resides in the nucleus. Its subcellular location is the chromosome. Its function is as follows. Single-stranded DNA-dependent ATP-dependent helicase that plays a key role in DNA non-homologous end joining (NHEJ) by recruiting DNA-PK to DNA. Required for double-strand break repair and V(D)J recombination. Also has a role in chromosome translocation. Has a role in chromosome translocation. The DNA helicase II complex binds preferentially to fork-like ends of double-stranded DNA in a cell cycle-dependent manner. It works in the 3'-5' direction. During NHEJ, the XRCC5-XRRC6 dimer performs the recognition step: it recognizes and binds to the broken ends of the DNA and protects them from further resection. Binding to DNA may be mediated by XRCC6. The XRCC5-XRRC6 dimer acts as a regulatory subunit of the DNA-dependent protein kinase complex DNA-PK by increasing the affinity of the catalytic subunit PRKDC to DNA by 100-fold. The XRCC5-XRRC6 dimer is probably involved in stabilizing broken DNA ends and bringing them together. The assembly of the DNA-PK complex to DNA ends is required for the NHEJ ligation step. Probably also acts as a 5'-deoxyribose-5-phosphate lyase (5'-dRP lyase), by catalyzing the beta-elimination of the 5' deoxyribose-5-phosphate at an abasic site near double-strand breaks. 5'-dRP lyase activity allows to 'clean' the termini of abasic sites, a class of nucleotide damage commonly associated with strand breaks, before such broken ends can be joined. The XRCC5-XRRC6 dimer together with APEX1 acts as a negative regulator of transcription. The protein is X-ray repair cross-complementing protein 5 (XRCC6) of Gallus gallus (Chicken).